A 272-amino-acid chain; its full sequence is Phosphatidylglycerol--prolipoprotein diacylglyceryl transferase (272 aa).

4 helical membrane passes run 24 to 44, 59 to 79, 102 to 122, and 129 to 149; these read WYGI…KWIA, YFIW…ILFY, FIGI…IASF, and GVKF…GYVF. Residue R151 participates in a 1,2-diacyl-sn-glycero-3-phospho-(1'-sn-glycerol) binding. A run of 3 helical transmembrane segments spans residues 180–200, 208–228, and 244–264; these read PSQL…LYAW, GQLG…AEFW, and MGQL…GYLA.

The protein belongs to the Lgt family.

It is found in the cell inner membrane. The enzyme catalyses L-cysteinyl-[prolipoprotein] + a 1,2-diacyl-sn-glycero-3-phospho-(1'-sn-glycerol) = an S-1,2-diacyl-sn-glyceryl-L-cysteinyl-[prolipoprotein] + sn-glycerol 1-phosphate + H(+). The protein operates within protein modification; lipoprotein biosynthesis (diacylglyceryl transfer). Functionally, catalyzes the transfer of the diacylglyceryl group from phosphatidylglycerol to the sulfhydryl group of the N-terminal cysteine of a prolipoprotein, the first step in the formation of mature lipoproteins. This chain is Phosphatidylglycerol--prolipoprotein diacylglyceryl transferase, found in Wolinella succinogenes (strain ATCC 29543 / DSM 1740 / CCUG 13145 / JCM 31913 / LMG 7466 / NCTC 11488 / FDC 602W) (Vibrio succinogenes).